The primary structure comprises 52 residues: Ovomucoid (52 aa).

The 51-residue stretch at 2 to 52 (VDCSDYPKPVCTLEEMPLCGSDNKTYGNKCNFCNAVVDSNGTLTLSHFGKC) folds into the Kazal-like domain. Disulfide bonds link Cys4–Cys34, Cys12–Cys31, and Cys20–Cys52. Asn41 carries an N-linked (GlcNAc...) asparagine glycan.

The protein localises to the secreted. In Scythrops novaehollandiae (Channel-billed cuckoo), this protein is Ovomucoid.